A 327-amino-acid chain; its full sequence is tRNA dimethylallyltransferase (327 aa).

14–21 (GPTASGKT) serves as a coordination point for ATP. 16–21 (TASGKT) serves as a coordination point for substrate. Interaction with substrate tRNA regions lie at residues 39–42 (DSAL) and 163–167 (QRIQR).

This sequence belongs to the IPP transferase family. In terms of assembly, monomer. The cofactor is Mg(2+).

It catalyses the reaction adenosine(37) in tRNA + dimethylallyl diphosphate = N(6)-dimethylallyladenosine(37) in tRNA + diphosphate. In terms of biological role, catalyzes the transfer of a dimethylallyl group onto the adenine at position 37 in tRNAs that read codons beginning with uridine, leading to the formation of N6-(dimethylallyl)adenosine (i(6)A). In Xanthomonas oryzae pv. oryzae (strain PXO99A), this protein is tRNA dimethylallyltransferase.